A 375-amino-acid chain; its full sequence is Alpha-2,8-sialyltransferase 8B (375 aa).

The Cytoplasmic portion of the chain corresponds to 1 to 6 (MQLQFR). Residues 7-23 (SWMLAALTLLVVFLIFA) form a helical; Signal-anchor for type II membrane protein membrane-spanning segment. The Lumenal portion of the chain corresponds to 24 to 375 (DISEIEEEIG…LTVGQCDGAT (352 aa)). Residues N60, N72, N89, and N134 are each glycosylated (N-linked (GlcNAc...) asparagine). 2 disulfides stabilise this stretch: C157/C307 and C171/C371. CMP-N-acetyl-beta-neuraminate contacts are provided by N162 and N185. N219 and N234 each carry an N-linked (GlcNAc...) asparagine glycan. The CMP-N-acetyl-beta-neuraminate site is built by T294, T295, G296, W316, Y329, and H330. The active-site Proton donor/acceptor is H346.

This sequence belongs to the glycosyltransferase 29 family. In terms of processing, autopolysialylated. Autopolysialylation is not a prerequisite for the polysialylation acitity, but enhances the polysialylation acitity.

The protein resides in the golgi apparatus membrane. The protein localises to the secreted. Its subcellular location is the cell membrane. The catalysed reaction is [N-acetyl-alpha-D-neuraminosyl-(2-&gt;8)](n) + CMP-N-acetyl-beta-neuraminate = [N-acetyl-alpha-D-neuraminosyl-(2-&gt;8)](n+1) + CMP + H(+). The protein operates within protein modification; protein glycosylation. In terms of biological role, catalyzes the transfer of a sialic acid from a CMP-linked sialic acid donor onto a terminal alpha-2,3-, alpha-2,6-, or alpha-2,8-linked sialic acid of an N-linked glycan acceptor through alpha-2,8-linkages. Therefore, participates in polysialic acid synthesis on various sialylated N-acetyllactosaminyl oligosaccharides (alpha-2,3-, alpha-2,6-, or alpha-2,8-linked sialic acid), including NCAM1, NCAM1 N-glycans, FETUB N-glycans, and to a lesser extent sialylparagloboside (SPG) and AHSG, which does not require the initial addition of an alpha 2,8-sialic acid. However, does not exhibit sialic acid-polymerase activity. Catalyzes polysialic acid synthesis in the hippocampal on NCAM1 and supports neurite outgrowth. ST8SIA2-mediated polysialylation influences on oligodendrocyte differentiation and may promote the integrity of myelin and axons. The chain is Alpha-2,8-sialyltransferase 8B from Pan troglodytes (Chimpanzee).